Reading from the N-terminus, the 445-residue chain is T-box transcription factor TBX19 (445 aa).

Residues 45 to 218 (LEDAPLWQRF…YNPFAKAFLD (174 aa)) constitute a DNA-binding region (T-box).

The protein localises to the nucleus. Functionally, transcriptional regulator involved in developmental processes. Can activate POMC gene expression and repress the alpha glycoprotein subunit and thyroid-stimulating hormone beta promoters. This is T-box transcription factor TBX19 from Canis lupus familiaris (Dog).